Consider the following 500-residue polypeptide: Glucose-6-phosphate 1-dehydrogenase (500 aa).

Residues 18–25 (GASGDLSK), arginine 52, and lysine 155 contribute to the NADP(+) site. Residues lysine 155, 185–189 (HYLGK), glutamate 223, and aspartate 242 each bind D-glucose 6-phosphate. Histidine 247 acts as the Proton acceptor in catalysis. Residue lysine 338 participates in NADP(+) binding. Lysine 341 is a D-glucose 6-phosphate binding site. NADP(+)-binding residues include lysine 347, arginine 351, and arginine 373. Glutamine 375 lines the D-glucose 6-phosphate pocket. NADP(+) contacts are provided by residues 381 to 383 (YFK), 401 to 403 (DLT), and tyrosine 483.

It belongs to the glucose-6-phosphate dehydrogenase family.

It localises to the cytoplasm. The protein resides in the cytosol. The enzyme catalyses D-glucose 6-phosphate + NADP(+) = 6-phospho-D-glucono-1,5-lactone + NADPH + H(+). The protein operates within carbohydrate degradation; pentose phosphate pathway; D-ribulose 5-phosphate from D-glucose 6-phosphate (oxidative stage): step 1/3. Its function is as follows. Catalyzes the rate-limiting step of the oxidative pentose-phosphate pathway, which represents a route for the dissimilation of carbohydrates besides glycolysis. The main function of this enzyme is to provide reducing power (NADPH) and pentose phosphates for fatty acid and nucleic acid synthesis. The chain is Glucose-6-phosphate 1-dehydrogenase from Schizosaccharomyces pombe (strain 972 / ATCC 24843) (Fission yeast).